A 271-amino-acid polypeptide reads, in one-letter code: Protein FAM110D (271 aa).

Residues 1–13 show a composition bias toward polar residues; sequence MLLSSPTTPSRGR. Disordered stretches follow at residues 1-84, 118-149, and 186-242; these read MLLS…PDSL, DAAPSSPAPTERPGAPAGWAGSPDTPEATGKR, and PQSW…GRPT.

This sequence belongs to the FAM110 family.

The sequence is that of Protein FAM110D from Mus musculus (Mouse).